A 530-amino-acid chain; its full sequence is Glucose-6-phosphate isomerase (530 aa).

Glutamate 322 serves as the catalytic Proton donor. Active-site residues include histidine 351 and lysine 455.

The protein belongs to the GPI family.

It is found in the cytoplasm. It catalyses the reaction alpha-D-glucose 6-phosphate = beta-D-fructose 6-phosphate. The protein operates within carbohydrate biosynthesis; gluconeogenesis. Its pathway is carbohydrate degradation; glycolysis; D-glyceraldehyde 3-phosphate and glycerone phosphate from D-glucose: step 2/4. Its function is as follows. Catalyzes the reversible isomerization of glucose-6-phosphate to fructose-6-phosphate. In Citrifermentans bemidjiense (strain ATCC BAA-1014 / DSM 16622 / JCM 12645 / Bem) (Geobacter bemidjiensis), this protein is Glucose-6-phosphate isomerase.